A 327-amino-acid polypeptide reads, in one-letter code: Zinc transport protein ZntB (327 aa).

At 1–271 the chain is on the cytoplasmic side; it reads MESFAGKELQ…AMNRRTYTMS (271 aa). The helical transmembrane segment at 272–292 threads the bilayer; sequence LLAMVFLPTTFLTGLFGVNLG. At 293–300 the chain is on the periplasmic side; sequence GIPGGDAP. Residues 301–321 traverse the membrane as a helical segment; that stretch reads FGFFTFCLMLVILVGGVAWWL. The Cytoplasmic portion of the chain corresponds to 322–327; that stretch reads KRSKWL.

It belongs to the CorA metal ion transporter (MIT) (TC 1.A.35) family.

The protein resides in the cell inner membrane. It catalyses the reaction Zn(2+)(out) + H(+)(out) = Zn(2+)(in) + H(+)(in). Its function is as follows. Zinc transporter. Acts as a Zn(2+):proton symporter, which likely mediates zinc ion uptake. This is Zinc transport protein ZntB from Pectobacterium atrosepticum (strain SCRI 1043 / ATCC BAA-672) (Erwinia carotovora subsp. atroseptica).